Here is a 455-residue protein sequence, read N- to C-terminus: Anaerobic glycerol-3-phosphate dehydrogenase subunit B (455 aa).

It belongs to the anaerobic G-3-P dehydrogenase subunit B family. As to quaternary structure, composed of a catalytic GlpA/B dimer and of membrane bound GlpC. FMN serves as cofactor.

It carries out the reaction a quinone + sn-glycerol 3-phosphate = dihydroxyacetone phosphate + a quinol. It functions in the pathway polyol metabolism; glycerol degradation via glycerol kinase pathway; glycerone phosphate from sn-glycerol 3-phosphate (anaerobic route): step 1/1. Its function is as follows. Conversion of glycerol 3-phosphate to dihydroxyacetone. Uses fumarate or nitrate as electron acceptor. The protein is Anaerobic glycerol-3-phosphate dehydrogenase subunit B of Aliivibrio fischeri (strain MJ11) (Vibrio fischeri).